The following is a 152-amino-acid chain: Protein SprT-like (152 aa).

One can recognise a SprT-like domain in the interval 9–149 (LQKLTETISL…CGKCNGKLKE (141 aa)). A Zn(2+)-binding site is contributed by His70. The active site involves Glu71. Residue His74 coordinates Zn(2+).

This sequence belongs to the SprT family. The cofactor is Zn(2+).

The protein localises to the cytoplasm. The polypeptide is Protein SprT-like (Staphylococcus saprophyticus subsp. saprophyticus (strain ATCC 15305 / DSM 20229 / NCIMB 8711 / NCTC 7292 / S-41)).